The chain runs to 217 residues: Octanoyltransferase (217 aa).

The region spanning 33-208 (SSSQDEIWLV…KLCSLLGIAS (176 aa)) is the BPL/LPL catalytic domain. Substrate contacts are provided by residues 72-79 (RGGQVTYH), 139-141 (SIG), and 152-154 (GLA). The active-site Acyl-thioester intermediate is cysteine 170.

This sequence belongs to the LipB family.

The protein localises to the cytoplasm. It catalyses the reaction octanoyl-[ACP] + L-lysyl-[protein] = N(6)-octanoyl-L-lysyl-[protein] + holo-[ACP] + H(+). Its pathway is protein modification; protein lipoylation via endogenous pathway; protein N(6)-(lipoyl)lysine from octanoyl-[acyl-carrier-protein]: step 1/2. Catalyzes the transfer of endogenously produced octanoic acid from octanoyl-acyl-carrier-protein onto the lipoyl domains of lipoate-dependent enzymes. Lipoyl-ACP can also act as a substrate although octanoyl-ACP is likely to be the physiological substrate. This chain is Octanoyltransferase, found in Pseudoalteromonas atlantica (strain T6c / ATCC BAA-1087).